A 393-amino-acid polypeptide reads, in one-letter code: Methylthioribose kinase (393 aa).

ATP contacts are provided by residues asparagine 38, lysine 53, and 107–109 (EDL). Aspartate 225 serves as a coordination point for substrate. 242–244 (DPE) is a binding site for ATP. Arginine 332 is a binding site for substrate.

This sequence belongs to the methylthioribose kinase family. In terms of assembly, homodimer.

It carries out the reaction 5-(methylsulfanyl)-D-ribose + ATP = 5-(methylsulfanyl)-alpha-D-ribose 1-phosphate + ADP + H(+). It functions in the pathway amino-acid biosynthesis; L-methionine biosynthesis via salvage pathway; S-methyl-5-thio-alpha-D-ribose 1-phosphate from S-methyl-5'-thioadenosine (hydrolase route): step 2/2. Its function is as follows. Catalyzes the phosphorylation of methylthioribose into methylthioribose-1-phosphate. The polypeptide is Methylthioribose kinase (Bacillus cereus (strain 03BB102)).